Consider the following 221-residue polypeptide: Ribosomal RNA small subunit methyltransferase Nep1 (221 aa).

Residues Gly-174, Gly-179, and 196 to 201 (LGEVAM) contribute to the S-adenosyl-L-methionine site.

It belongs to the class IV-like SAM-binding methyltransferase superfamily. RNA methyltransferase NEP1 family. Homodimer.

It catalyses the reaction a pseudouridine in rRNA + S-adenosyl-L-methionine = an N(1)-methylpseudouridine in rRNA + S-adenosyl-L-homocysteine + H(+). Methyltransferase involved in ribosomal biogenesis. Specifically catalyzes the N1-methylation of the pseudouridine corresponding to position 914 in M.jannaschii 16S rRNA. The chain is Ribosomal RNA small subunit methyltransferase Nep1 from Pyrobaculum arsenaticum (strain DSM 13514 / JCM 11321 / PZ6).